We begin with the raw amino-acid sequence, 80 residues long: DinI-like protein Z2083/ECs2153 (80 aa).

This chain is DinI-like protein Z2083/ECs2153, found in Escherichia coli O157:H7.